The chain runs to 172 residues: Shikimate kinase (172 aa).

Position 17-22 (17-22 (GTGKST)) interacts with ATP. S21 serves as a coordination point for Mg(2+). D39, R63, and G84 together coordinate substrate. R122 is a binding site for ATP. R140 is a substrate binding site.

The protein belongs to the shikimate kinase family. Monomer. Requires Mg(2+) as cofactor.

It localises to the cytoplasm. It carries out the reaction shikimate + ATP = 3-phosphoshikimate + ADP + H(+). Its pathway is metabolic intermediate biosynthesis; chorismate biosynthesis; chorismate from D-erythrose 4-phosphate and phosphoenolpyruvate: step 5/7. Functionally, catalyzes the specific phosphorylation of the 3-hydroxyl group of shikimic acid using ATP as a cosubstrate. This Staphylococcus haemolyticus (strain JCSC1435) protein is Shikimate kinase.